The sequence spans 252 residues: Probable transcriptional regulatory protein RT0442 (252 aa).

Residues 1–22 (MSGHSKFKNIQHRKGAQDKKKS) form a disordered region.

This sequence belongs to the TACO1 family.

The protein localises to the cytoplasm. This Rickettsia typhi (strain ATCC VR-144 / Wilmington) protein is Probable transcriptional regulatory protein RT0442.